Reading from the N-terminus, the 501-residue chain is Cytochrome P450 3A6 (501 aa).

Position 440 (cysteine 440) interacts with heme.

It belongs to the cytochrome P450 family. Heme is required as a cofactor.

Its subcellular location is the endoplasmic reticulum membrane. The protein localises to the microsome membrane. It carries out the reaction an organic molecule + reduced [NADPH--hemoprotein reductase] + O2 = an alcohol + oxidized [NADPH--hemoprotein reductase] + H2O + H(+). In terms of biological role, exhibits progesterone 6 beta-hydroxylase activity. This chain is Cytochrome P450 3A6 (CYP3A6), found in Oryctolagus cuniculus (Rabbit).